A 132-amino-acid chain; its full sequence is Small ribosomal subunit protein uS8 (132 aa).

It belongs to the universal ribosomal protein uS8 family. Part of the 30S ribosomal subunit. Contacts proteins S5 and S12.

One of the primary rRNA binding proteins, it binds directly to 16S rRNA central domain where it helps coordinate assembly of the platform of the 30S subunit. This is Small ribosomal subunit protein uS8 from Rickettsia felis (strain ATCC VR-1525 / URRWXCal2) (Rickettsia azadi).